Here is a 252-residue protein sequence, read N- to C-terminus: Pyridoxine 5'-phosphate synthase (252 aa).

3-amino-2-oxopropyl phosphate is bound at residue asparagine 12. 14–15 (DH) lines the 1-deoxy-D-xylulose 5-phosphate pocket. Arginine 23 provides a ligand contact to 3-amino-2-oxopropyl phosphate. The Proton acceptor role is filled by histidine 48. 1-deoxy-D-xylulose 5-phosphate is bound by residues arginine 50 and histidine 55. Catalysis depends on glutamate 75, which acts as the Proton acceptor. A 1-deoxy-D-xylulose 5-phosphate-binding site is contributed by threonine 105. Histidine 199 functions as the Proton donor in the catalytic mechanism. Residues glycine 200 and 221-222 (GH) contribute to the 3-amino-2-oxopropyl phosphate site.

The protein belongs to the PNP synthase family. In terms of assembly, homooctamer; tetramer of dimers.

The protein localises to the cytoplasm. It catalyses the reaction 3-amino-2-oxopropyl phosphate + 1-deoxy-D-xylulose 5-phosphate = pyridoxine 5'-phosphate + phosphate + 2 H2O + H(+). It participates in cofactor biosynthesis; pyridoxine 5'-phosphate biosynthesis; pyridoxine 5'-phosphate from D-erythrose 4-phosphate: step 5/5. Its function is as follows. Catalyzes the complicated ring closure reaction between the two acyclic compounds 1-deoxy-D-xylulose-5-phosphate (DXP) and 3-amino-2-oxopropyl phosphate (1-amino-acetone-3-phosphate or AAP) to form pyridoxine 5'-phosphate (PNP) and inorganic phosphate. The chain is Pyridoxine 5'-phosphate synthase from Cereibacter sphaeroides (strain ATCC 17029 / ATH 2.4.9) (Rhodobacter sphaeroides).